A 316-amino-acid polypeptide reads, in one-letter code: Ribosomal protein L11 methyltransferase (316 aa).

Residues Thr-157, Gly-178, Asp-200, and Asn-243 each contribute to the S-adenosyl-L-methionine site.

Belongs to the methyltransferase superfamily. PrmA family.

The protein localises to the cytoplasm. It catalyses the reaction L-lysyl-[protein] + 3 S-adenosyl-L-methionine = N(6),N(6),N(6)-trimethyl-L-lysyl-[protein] + 3 S-adenosyl-L-homocysteine + 3 H(+). Its function is as follows. Methylates ribosomal protein L11. In Streptococcus pneumoniae (strain P1031), this protein is Ribosomal protein L11 methyltransferase.